The sequence spans 231 residues: 7-cyano-7-deazaguanine synthase (231 aa).

8-18 (FSGGQDSTTCL) contacts ATP. Residues C188, C197, C200, and C203 each coordinate Zn(2+).

Belongs to the QueC family. Requires Zn(2+) as cofactor.

It catalyses the reaction 7-carboxy-7-deazaguanine + NH4(+) + ATP = 7-cyano-7-deazaguanine + ADP + phosphate + H2O + H(+). Its pathway is purine metabolism; 7-cyano-7-deazaguanine biosynthesis. In terms of biological role, catalyzes the ATP-dependent conversion of 7-carboxy-7-deazaguanine (CDG) to 7-cyano-7-deazaguanine (preQ(0)). The chain is 7-cyano-7-deazaguanine synthase from Sodalis glossinidius (strain morsitans).